The chain runs to 168 residues: 3-isopropylmalate dehydratase small subunit (168 aa).

This sequence belongs to the LeuD family. LeuD type 2 subfamily. In terms of assembly, heterodimer of LeuC and LeuD.

The catalysed reaction is (2R,3S)-3-isopropylmalate = (2S)-2-isopropylmalate. The protein operates within amino-acid biosynthesis; L-leucine biosynthesis; L-leucine from 3-methyl-2-oxobutanoate: step 2/4. Catalyzes the isomerization between 2-isopropylmalate and 3-isopropylmalate, via the formation of 2-isopropylmaleate. The chain is 3-isopropylmalate dehydratase small subunit from Thermodesulfovibrio yellowstonii (strain ATCC 51303 / DSM 11347 / YP87).